Consider the following 384-residue polypeptide: Chaperone protein DnaJ (384 aa).

Positions 5-70 constitute a J domain; that stretch reads DYYEVLGVAR…QKKAAYDRFG (66 aa). The CR-type zinc-finger motif lies at 138 to 216; that stretch reads GAQKTINVPG…CRGAGRVQKE (79 aa). The Zn(2+) site is built by C151, C154, C168, C171, C190, C193, C204, and C207. 4 CXXCXGXG motif repeats span residues 151–158, 168–175, 190–197, and 204–211; these read CAACNGTG, CPTCSGMG, CPTCSGHG, and CQECRGAG. The interval 300-322 is disordered; it reads KVPPGTQSGKQLRLRGKGMPPLR.

Belongs to the DnaJ family. In terms of assembly, homodimer. Zn(2+) is required as a cofactor.

It localises to the cytoplasm. Its function is as follows. Participates actively in the response to hyperosmotic and heat shock by preventing the aggregation of stress-denatured proteins and by disaggregating proteins, also in an autonomous, DnaK-independent fashion. Unfolded proteins bind initially to DnaJ; upon interaction with the DnaJ-bound protein, DnaK hydrolyzes its bound ATP, resulting in the formation of a stable complex. GrpE releases ADP from DnaK; ATP binding to DnaK triggers the release of the substrate protein, thus completing the reaction cycle. Several rounds of ATP-dependent interactions between DnaJ, DnaK and GrpE are required for fully efficient folding. Also involved, together with DnaK and GrpE, in the DNA replication of plasmids through activation of initiation proteins. The polypeptide is Chaperone protein DnaJ (Paracoccus denitrificans (strain Pd 1222)).